We begin with the raw amino-acid sequence, 144 residues long: Large ribosomal subunit protein uL15 (144 aa).

The disordered stretch occupies residues 1 to 58; that stretch reads MKLNNLSPAPGSKHAEKRVGRGIGSGLGKTGGRGHKGQKSRSGGSVKPGFEGGQMPLQ. A compositionally biased stretch (gly residues) spans 21 to 31; it reads RGIGSGLGKTG.

The protein belongs to the universal ribosomal protein uL15 family. Part of the 50S ribosomal subunit.

In terms of biological role, binds to the 23S rRNA. This Chromohalobacter salexigens (strain ATCC BAA-138 / DSM 3043 / CIP 106854 / NCIMB 13768 / 1H11) protein is Large ribosomal subunit protein uL15.